The primary structure comprises 741 residues: Protein O-mannosyl-transferase TMTC4 (741 aa).

The Cytoplasmic portion of the chain corresponds to 1–14; sequence MAVLDTDLDHILPS. A helical membrane pass occupies residues 15 to 35; the sequence is SVLPPFWAKLVVGSVAIVCFA. Residues 36–111 are Extracellular-facing; sequence RSYDGDFVFD…FHPVGFHVVN (76 aa). Asn-78 carries N-linked (GlcNAc...) asparagine glycosylation. A helical membrane pass occupies residues 112–132; the sequence is ILLHSGISVLMVDVFSVLFGG. Residues 133-141 are Cytoplasmic-facing; the sequence is LQYTSKGRR. The chain crosses the membrane as a helical span at residues 142-162; sequence LHLAPRASLLAALLFAVHPVH. The Extracellular portion of the chain corresponds to 163–165; the sequence is TEC. The chain crosses the membrane as a helical span at residues 166-186; it reads VAGVVGRADLLCALFFLLSFL. The Cytoplasmic portion of the chain corresponds to 187–198; sequence GYCKAFRESNKE. A helical transmembrane segment spans residues 199 to 219; the sequence is GAHSSTFWVLLSIFLGAVAML. Residues 220 to 224 are Extracellular-facing; that stretch reads CKEQG. The helical transmembrane segment at 225–245 threads the bilayer; the sequence is ITVLGLNAVFDILVIGKFNVL. The Cytoplasmic segment spans residues 246-268; the sequence is EIVQKVLHKDKSLENLGMLRNGG. Residues 269–288 form a helical membrane-spanning segment; it reads LLFRMTLLTSGGAGMLYVRW. At 289 to 354 the chain is on the extracellular side; that stretch reads RIMGTGPPAF…PLIKSISDWR (66 aa). The chain crosses the membrane as a helical span at residues 355-375; it reads VIALAALWFCLIGLICQALCS. Residues 376 to 382 are Cytoplasmic-facing; it reads EDGHKRR. Residues 383–403 traverse the membrane as a helical segment; the sequence is ILTLGLGFLVIPFLPASNLFF. Residues 404 to 412 are Extracellular-facing; it reads RVGFVVAER. Residues 413-433 traverse the membrane as a helical segment; it reads VLYLPSVGYCVLLTFGFGALS. The Cytoplasmic portion of the chain corresponds to 434–440; it reads KHTKKKK. Residues 441 to 461 form a helical membrane-spanning segment; it reads LIAAVVLGILFINTLRCVLRS. The Extracellular portion of the chain corresponds to 462 to 741; the sequence is GEWRSEEQLF…KLELMQKKAV (280 aa). TPR repeat units lie at residues 482–515, 516–549, 550–583, 584–617, 618–651, 652–685, and 686–719; these read AKVHYNIGKNLADKGNQTAAIRYYREAVRLNPKY, VHAMNNLGNILKERNELQEAEELLSLAVQIQPDF, AAAWMNLGIVQNSLKRFEAAEQSYRTAIKHRRKY, PDCYYNLGRLYADLNRHVDALNAWRNATVLKPEH, SLAWNNMIILLDNTGNLAQAEAVGREALELIPND, HSLMFSLANVLGKSQKYKESEALFLKAIKANPNA, and ASYHGNLAVLYHRWGHLDLAKKHYEISLQLDPTA. N-linked (GlcNAc...) asparagine glycosylation occurs at Asn-497. The N-linked (GlcNAc...) asparagine glycan is linked to Asn-609.

Belongs to the TMTC family.

The protein resides in the membrane. It localises to the endoplasmic reticulum. It catalyses the reaction a di-trans,poly-cis-dolichyl beta-D-mannosyl phosphate + L-seryl-[protein] = 3-O-(alpha-D-mannosyl)-L-seryl-[protein] + a di-trans,poly-cis-dolichyl phosphate + H(+). The enzyme catalyses a di-trans,poly-cis-dolichyl beta-D-mannosyl phosphate + L-threonyl-[protein] = 3-O-(alpha-D-mannosyl)-L-threonyl-[protein] + a di-trans,poly-cis-dolichyl phosphate + H(+). Its pathway is protein modification; protein glycosylation. Its function is as follows. Transfers mannosyl residues to the hydroxyl group of serine or threonine residues. The 4 members of the TMTC family are O-mannosyl-transferases dedicated primarily to the cadherin superfamily, each member seems to have a distinct role in decorating the cadherin domains with O-linked mannose glycans at specific regions. Also acts as O-mannosyl-transferase on other proteins such as PDIA3. The polypeptide is Protein O-mannosyl-transferase TMTC4 (Homo sapiens (Human)).